Reading from the N-terminus, the 156-residue chain is Small ribosomal subunit protein uS7 (156 aa).

The protein belongs to the universal ribosomal protein uS7 family. Part of the 30S ribosomal subunit. Contacts proteins S9 and S11.

One of the primary rRNA binding proteins, it binds directly to 16S rRNA where it nucleates assembly of the head domain of the 30S subunit. Is located at the subunit interface close to the decoding center, probably blocks exit of the E-site tRNA. The polypeptide is Small ribosomal subunit protein uS7 (Desulfitobacterium hafniense (strain Y51)).